Reading from the N-terminus, the 910-residue chain is Eukaryotic translation initiation factor 3 subunit C (910 aa).

Positions 1–21 (MSRFFANGSDSESESSEDEIQ) are disordered. The span at 11–20 (SESESSEDEI) shows a compositional bias: acidic residues. Phosphoserine is present on residues S34, S165, S176, and S185. Residues 157–281 (FREAPDQESE…KRAEDDEDGE (125 aa)) are disordered. Positions 162 to 186 (DQESEAEDEVVAQESDGGDAGDDSD) are enriched in acidic residues. The span at 193 to 207 (EAAPKAVKSAPAKAA) shows a compositional bias: low complexity. Acidic residues predominate over residues 209–235 (ADDDDSDDSIDWDSDSESETESSDDEN). The segment covering 240–268 (MRERFLKRTTEKEEKDDDKRKDKRKEQKV) has biased composition (basic and acidic residues). One can recognise a PCI domain in the interval 639 to 815 (FHMHINLELL…ETVVMHRSEP (177 aa)). A disordered region spans residues 847–910 (FFQRGNMGNR…QQQVQTIDEE (64 aa)). The span at 862–874 (NRNQNNQGGNWLG) shows a compositional bias: low complexity. A compositionally biased stretch (basic residues) spans 882–891 (RNRNQRGHHK). Low complexity predominate over residues 895–910 (DRQQQQQQQVQTIDEE).

This sequence belongs to the eIF-3 subunit C family. Component of the eukaryotic translation initiation factor 3 (eIF-3) complex. The eIF-3 complex interacts with pix.

It is found in the cytoplasm. In terms of biological role, component of the eukaryotic translation initiation factor 3 (eIF-3) complex, which is involved in protein synthesis of a specialized repertoire of mRNAs and, together with other initiation factors, stimulates binding of mRNA and methionyl-tRNAi to the 40S ribosome. The eIF-3 complex specifically targets and initiates translation of a subset of mRNAs involved in cell proliferation. The protein is Eukaryotic translation initiation factor 3 subunit C of Drosophila yakuba (Fruit fly).